The following is a 243-amino-acid chain: Ornithine decarboxylase antizyme 3 (243 aa).

Residues Ser-6, Ser-9, and Ser-12 each carry the phosphoserine modification.

This sequence belongs to the ODC antizyme family. In terms of assembly, interacts with ODC1 and thereby sterically blocks ODC homodimerization. Interacts with AZIN2; this interaction disrupts the interaction between the antizyme and ODC1. Interacts with GGN. Isoform 2 interacts with PPP1R16A; Modulates PPP1CB activity. As to expression, testis-specific. Isoform 2 is expressed in outer dense fibers, fibrous sheath and the connecting piece of sperm.

The protein resides in the nucleus. Its subcellular location is the cytoplasm. It is found in the cell projection. The protein localises to the cilium. It localises to the flagellum. In terms of biological role, ornithine decarboxylase (ODC) antizyme protein that negatively regulates ODC activity and intracellular polyamine biosynthesis and uptake in response to increased intracellular polyamine levels. Binds to ODC monomers, inhibiting the assembly of the functional ODC homodimers. Does not target the ODC monomers for degradation, which allows a protein synthesis-independent restoration of ODC activity. Stabilizes AZIN2 by interfering with its ubiquitination. Involved in the translocation of AZNI2 from ER-Golgi intermediate compartment (ERGIC) to the cytosol. Probably plays a key role in spermatogenesis by regulating the intracellular concentration of polyamines in haploid germ cells. Does not possess antizyme activity. Modulates PPP1CB activity through its interaction with PPP1R16A. In Rattus norvegicus (Rat), this protein is Ornithine decarboxylase antizyme 3.